A 450-amino-acid chain; its full sequence is C4-dicarboxylate transport protein (450 aa).

The next 9 membrane-spanning stretches (helical) occupy residues Ser10 to Pro30, Leu46 to Met66, Tyr78 to Val98, Ile143 to Gly163, Ile190 to Ile210, Leu224 to Ala244, Val291 to Leu311, Ile332 to Gly352, and Ile354 to Ile374. The disordered stretch occupies residues Pro428–Val450.

This sequence belongs to the dicarboxylate/amino acid:cation symporter (DAACS) (TC 2.A.23) family.

It localises to the cell inner membrane. Its function is as follows. Responsible for the transport of dicarboxylates such as succinate, fumarate, and malate from the periplasm across the membrane. This is C4-dicarboxylate transport protein from Pseudomonas syringae pv. syringae (strain B728a).